Here is a 138-residue protein sequence, read N- to C-terminus: Large ribosomal subunit protein bL12c (138 aa).

It belongs to the bacterial ribosomal protein bL12 family. In terms of assembly, homodimer. Part of the ribosomal stalk of the 50S ribosomal subunit. Forms a multimeric L10(L12)X complex, where L10 forms an elongated spine to which 2 to 4 L12 dimers bind in a sequential fashion. Binds GTP-bound translation factors.

It is found in the plastid. In terms of biological role, forms part of the ribosomal stalk which helps the ribosome interact with GTP-bound translation factors. Is thus essential for accurate translation. In Euglena longa (Euglenophycean alga), this protein is Large ribosomal subunit protein bL12c.